Reading from the N-terminus, the 180-residue chain is ATP synthase subunit b (180 aa).

The helical transmembrane segment at 26–46 threads the bilayer; the sequence is IPLMLATLAALVISIFFLTYF.

The protein belongs to the ATPase B chain family. F-type ATPases have 2 components, F(1) - the catalytic core - and F(0) - the membrane proton channel. F(1) has five subunits: alpha(3), beta(3), gamma(1), delta(1), epsilon(1). F(0) has three main subunits: a(1), b(2) and c(10-14). The alpha and beta chains form an alternating ring which encloses part of the gamma chain. F(1) is attached to F(0) by a central stalk formed by the gamma and epsilon chains, while a peripheral stalk is formed by the delta and b chains.

It is found in the cell membrane. F(1)F(0) ATP synthase produces ATP from ADP in the presence of a proton or sodium gradient. F-type ATPases consist of two structural domains, F(1) containing the extramembraneous catalytic core and F(0) containing the membrane proton channel, linked together by a central stalk and a peripheral stalk. During catalysis, ATP synthesis in the catalytic domain of F(1) is coupled via a rotary mechanism of the central stalk subunits to proton translocation. Functionally, component of the F(0) channel, it forms part of the peripheral stalk, linking F(1) to F(0). The sequence is that of ATP synthase subunit b from Mycoplasmopsis pulmonis (strain UAB CTIP) (Mycoplasma pulmonis).